We begin with the raw amino-acid sequence, 141 residues long: Aspartate 1-decarboxylase (141 aa).

Ser25 serves as the catalytic Schiff-base intermediate with substrate; via pyruvic acid. Position 25 is a pyruvic acid (Ser) (Ser25). Thr57 contributes to the substrate binding site. Tyr58 serves as the catalytic Proton donor. Gly73–Ala75 contributes to the substrate binding site.

The protein belongs to the PanD family. In terms of assembly, heterooctamer of four alpha and four beta subunits. It depends on pyruvate as a cofactor. In terms of processing, is synthesized initially as an inactive proenzyme, which is activated by self-cleavage at a specific serine bond to produce a beta-subunit with a hydroxyl group at its C-terminus and an alpha-subunit with a pyruvoyl group at its N-terminus.

The protein localises to the cytoplasm. The catalysed reaction is L-aspartate + H(+) = beta-alanine + CO2. Its pathway is cofactor biosynthesis; (R)-pantothenate biosynthesis; beta-alanine from L-aspartate: step 1/1. In terms of biological role, catalyzes the pyruvoyl-dependent decarboxylation of aspartate to produce beta-alanine. This is Aspartate 1-decarboxylase from Salinispora arenicola (strain CNS-205).